Here is a 906-residue protein sequence, read N- to C-terminus: Inter-alpha-trypsin inhibitor heavy chain H1 (906 aa).

The signal sequence occupies residues 1–22; it reads MGLRGLLCVCLVSLLALQAVAA. Positions 23-29 are excised as a propeptide; it reads QGSPTRN. One can recognise a VIT domain in the interval 32-161; the sequence is GGKKRMAVDA…KATFRLTYEE (130 aa). A glycan (S-linked (Hex...) cysteine) is linked at Cys-55. Ser-124 is subject to Phosphoserine. The VWFA domain occupies 287–470; the sequence is NVVFVIDISS…QQLQGFYEQV (184 aa). Phosphothreonine occurs at positions 397 and 402. The N-linked (GlcNAc...) asparagine glycan is linked to Asn-583. O-linked (GalNAc...) serine glycosylation occurs at Ser-643. Thr-648 carries O-linked (GalNAc...) threonine glycosylation. Position 667 is an aspartate 1-(chondroitin 4-sulfate)-ester (Asp-667). Residues 668 to 906 constitute a propeptide that is removed on maturation; that stretch reads PHFLIHVPQK…HTDYIVPDIF (239 aa). N-linked (GlcNAc...) asparagine glycosylation is present at Asn-745.

The protein belongs to the ITIH family. In terms of assembly, I-alpha-I plasma protease inhibitors are assembled from one or two heavy chains (HC) and one light chain, bikunin. Inter-alpha-inhibitor (I-alpha-I) is composed of ITIH1/HC1, ITIH2/HC2 and bikunin. Interacts with TNFAIP6 (via Link and CUB domains). Heavy chains are linked to bikunin via chondroitin 4-sulfate esterified to the alpha-carboxyl of the C-terminal aspartate after propeptide cleavage. In terms of processing, the S-linked glycan is composed of two 6-carbon sugars, possibly Glc or Gal.

Its subcellular location is the secreted. Its function is as follows. May act as a carrier of hyaluronan in serum or as a binding protein between hyaluronan and other matrix protein, including those on cell surfaces in tissues to regulate the localization, synthesis and degradation of hyaluronan which are essential to cells undergoing biological processes. This is Inter-alpha-trypsin inhibitor heavy chain H1 (ITIH1) from Bos taurus (Bovine).